A 180-amino-acid chain; its full sequence is SPbeta prophage-derived uncharacterized protein YosC (180 aa).

The chain is SPbeta prophage-derived uncharacterized protein YosC (yosC) from Bacillus subtilis (strain 168).